Consider the following 214-residue polypeptide: Adenylate kinase (214 aa).

An ATP-binding site is contributed by 10–15; the sequence is GAGKGT. The segment at 30-59 is NMP; sequence STGDMLRAAVKSGSELGKQAKDIMDAGKLV. AMP contacts are provided by residues Thr31, Arg36, 57 to 59, 85 to 88, and Gln92; these read KLV and GFPR. Residues 122-159 form an LID region; the sequence is GRRVHAPSGRVYHVKFNPPKVEGKDDVTGEELTTRKDD. Residues Arg123 and 132 to 133 each bind ATP; that span reads VY. Positions 156 and 167 each coordinate AMP. At Lys192 the chain carries N6-acetyllysine. An ATP-binding site is contributed by Lys200.

The protein belongs to the adenylate kinase family. In terms of assembly, monomer.

Its subcellular location is the cytoplasm. It catalyses the reaction AMP + ATP = 2 ADP. It functions in the pathway purine metabolism; AMP biosynthesis via salvage pathway; AMP from ADP: step 1/1. Functionally, catalyzes the reversible transfer of the terminal phosphate group between ATP and AMP. Plays an important role in cellular energy homeostasis and in adenine nucleotide metabolism. This Escherichia coli O45:K1 (strain S88 / ExPEC) protein is Adenylate kinase.